The following is a 470-amino-acid chain: Serine hydroxymethyltransferase, cytosolic (470 aa).

Over residues 1–11 the composition is skewed to polar residues; that stretch reads MSAYALSQSHR. The segment at 1–23 is disordered; it reads MSAYALSQSHRQLTEGHLKDTDP. An N-acetylserine modification is found at S2. Over residues 12 to 23 the composition is skewed to basic and acidic residues; the sequence is QLTEGHLKDTDP. The residue at position 249 (K249) is an N6-(pyridoxal phosphate)lysine.

Belongs to the SHMT family. Homotetramer. The cofactor is pyridoxal 5'-phosphate.

The protein localises to the cytoplasm. It carries out the reaction (6R)-5,10-methylene-5,6,7,8-tetrahydrofolate + glycine + H2O = (6S)-5,6,7,8-tetrahydrofolate + L-serine. The protein operates within one-carbon metabolism; tetrahydrofolate interconversion. Its function is as follows. Interconversion of serine and glycine. The sequence is that of Serine hydroxymethyltransferase, cytosolic (SHM2) from Candida albicans (strain SC5314 / ATCC MYA-2876) (Yeast).